Here is a 368-residue protein sequence, read N- to C-terminus: Probable leucine aminopeptidase ARB_03492 (368 aa).

The signal sequence occupies residues 1-18 (MKVSAIAAVAALAAVAVA). Residue Asn-92 is glycosylated (N-linked (GlcNAc...) asparagine). Zn(2+) contacts are provided by His-172 and Asp-191. Residues Asn-192 and Asn-216 are each glycosylated (N-linked (GlcNAc...) asparagine). Zn(2+) is bound by residues Glu-230 and Asp-257. Cys-301 and Cys-305 are joined by a disulfide. His-334 contributes to the Zn(2+) binding site.

The protein belongs to the peptidase M28 family. M28E subfamily. In terms of assembly, monomer. Requires Zn(2+) as cofactor.

The protein resides in the secreted. Functionally, probable extracellular aminopeptidase which contributes to pathogenicity. The protein is Probable leucine aminopeptidase ARB_03492 of Arthroderma benhamiae (strain ATCC MYA-4681 / CBS 112371) (Trichophyton mentagrophytes).